We begin with the raw amino-acid sequence, 970 residues long: Testis anion transporter 1 (970 aa).

Over 1-95 (MAQLERSAIS…YRLKDWLLGD (95 aa)) the chain is Cytoplasmic. The chain crosses the membrane as a helical span at residues 96 to 116 (LLAGISVGLVQVPQGLTLSLL). At 117 to 119 (ARQ) the chain is on the extracellular side. Residues 120 to 140 (LIPPLNIAYAAFCSSVIYVIF) traverse the membrane as a helical segment. Over 141–146 (GSCHQM) the chain is Cytoplasmic. The helical transmembrane segment at 147 to 167 (SIGSFFLVSALLINVLKVSPF) threads the bilayer. Residues 168-202 (NNGQLVMGSFVKNEFSAPSYLMGYNKSLSVVATTT) lie on the Extracellular side of the membrane. N-linked (GlcNAc...) asparagine glycosylation is present at Asn192. The helical transmembrane segment at 203 to 223 (FLTGIIQLIMGVLGLGFIATY) threads the bilayer. At 224–232 (LPESAMSAY) the chain is on the cytoplasmic side. Residues 233–253 (LAAVALHIMLSQLTFIFGIMI) traverse the membrane as a helical segment. At 254-270 (SFHAGPISFFYDIINYC) the chain is on the extracellular side. The helical transmembrane segment at 271–291 (VALPKANSTSILVFLTVVVAL) threads the bilayer. Residues 292–307 (RINKCIRISFNQYPIE) are Cytoplasmic-facing. Residues 308–328 (FPMELFLIIGFTVIANKISMA) traverse the membrane as a helical segment. At 329–355 (TETSQTLIDMIPYSFLLPVTPDFSLLP) the chain is on the extracellular side. The helical transmembrane segment at 356–376 (KIILQAFSLSLVSSFLLIFLG) threads the bilayer. At 377–392 (KKIASLHNYSVNSNQD) the chain is on the cytoplasmic side. A helical membrane pass occupies residues 393–413 (LIAIGLCNVVSSFFRSCVFTG). The Extracellular segment spans residues 414-429 (AIARTIIQDKSGGRQQ). A helical transmembrane segment spans residues 430 to 450 (FASLVGAGVMLLLMVKMGHFF). The Cytoplasmic portion of the chain corresponds to 451–452 (YT). Residues 453–473 (LPNAVLAGIILSNVIPYLETI) traverse the membrane as a helical segment. At 474–497 (SNLPSLWRQDQYDCALWMMTFSSS) the chain is on the extracellular side. The helical transmembrane segment at 498–518 (IFLGLDIGLIISVVSAFFITT) threads the bilayer. Residues 519–970 (VRSHRAKILL…SPEGNSNEDV (452 aa)) lie on the Cytoplasmic side of the membrane. In terms of domain architecture, STAS spans 543 to 795 (DYREIITIPG…LSVHDAVLFA (253 aa)). An interaction with RACGAP1 region spans residues 664–970 (TVSSVSQKNQ…SPEGNSNEDV (307 aa)). A compositionally biased stretch (acidic residues) spans 858–868 (SELDLELESEQ). Residues 858 to 970 (SELDLELESE…SPEGNSNEDV (113 aa)) are disordered. Basic and acidic residues predominate over residues 877–898 (DLDRELEPEMEPKAETETKTQT). The segment covering 938–948 (STQSQTQTRTW) has biased composition (low complexity).

The protein belongs to the SLC26A/SulP transporter (TC 2.A.53) family. As to quaternary structure, interacts with RACGAP1. Interacts with CFTR; stimulates anion transport activity of CFTR. N-glycosylated. In terms of tissue distribution, expression observed exclusively in testis, restricted to the meiotic phase of the germ cell. Abundant expression located in the seminiferous tubules, concentrated on the luminal side of the tubuli harboring the spermatocytes and spermatids.

It is found in the membrane. The catalysed reaction is sulfate(out) + chloride(in) = sulfate(in) + chloride(out). It carries out the reaction oxalate(in) + chloride(out) = oxalate(out) + chloride(in). Its activity is regulated as follows. Activity is inhibited by 4,4'-Di-isothiocyanatostilbene-2,2'-disulfonic acid (DIDS - an inhibitor of several anion channels and transporters) and gluconate. Its function is as follows. Antiporter that mediates the exchange of sulfate and oxalate against chloride ions across a membrane. Stimulates anion transport activity of CFTR. May cooperate with CFTR in the regulation of chloride and bicarbonate ions fluxes required for activation of the ADCY10/PKA pathway during sperm motility and sperm capacitation. May play a role in sperm tail differentiation and motility and hence male fertility. In Homo sapiens (Human), this protein is Testis anion transporter 1.